The following is a 75-amino-acid chain: Conotoxin TsMEKL-011 (75 aa).

An N-terminal signal peptide occupies residues 1–19; the sequence is MEKLTILLLVAAVLMSTQA. A propeptide spanning residues 20–45 is cleaved from the precursor; it reads LIQRGGAKRRKVNFFSIREPGAEDWR. Disulfide bonds link Cys-49–Cys-63, Cys-56–Cys-67, and Cys-62–Cys-71.

It belongs to the conotoxin O2 superfamily. As to expression, expressed by the venom duct.

It is found in the secreted. The chain is Conotoxin TsMEKL-011 from Conus tessulatus (Tessellate cone).